Reading from the N-terminus, the 318-residue chain is Beta-galactosidase small subunit (318 aa).

This sequence belongs to the bacterial beta-galactosidase small subunit family. In terms of assembly, heterodimer of a large (LacL) and a small subunit (LacM).

It catalyses the reaction Hydrolysis of terminal non-reducing beta-D-galactose residues in beta-D-galactosides.. Component of a beta-galactosidase. This chain is Beta-galactosidase small subunit, found in Latilactobacillus sakei (Lactobacillus sakei).